The sequence spans 119 residues: Large ribosomal subunit protein uL18 (119 aa).

The protein belongs to the universal ribosomal protein uL18 family. Part of the 50S ribosomal subunit; part of the 5S rRNA/L5/L18/L25 subcomplex. Contacts the 5S and 23S rRNAs.

Its function is as follows. This is one of the proteins that bind and probably mediate the attachment of the 5S RNA into the large ribosomal subunit, where it forms part of the central protuberance. This Anaeromyxobacter dehalogenans (strain 2CP-1 / ATCC BAA-258) protein is Large ribosomal subunit protein uL18.